Here is a 781-residue protein sequence, read N- to C-terminus: Matrix non-peptidase homolog 1 (781 aa).

Residues 1–27 form the signal peptide; that stretch reads MTPPPASPSKKAKSSWLLIALIAVIIG. N-linked (GlcNAc...) asparagine glycosylation occurs at Asn-54. Positions 63 to 94 are enriched in low complexity; sequence TSKATVSTTTTQSATTPSTTTTRIEETTTTTS. The tract at residues 63–113 is disordered; it reads TSKATVSTTTTQSATTPSTTTTRIEETTTTTSGAFDESVKNSEASTSTIPT. N-linked (GlcNAc...) asparagine glycosylation is found at Asn-183, Asn-341, Asn-375, and Asn-520.

This chain is Matrix non-peptidase homolog 1 (mnp-1), found in Caenorhabditis elegans.